The sequence spans 223 residues: uncharacterized protein (223 aa).

The segment at 117 to 148 is disordered; that stretch reads THAHTHAHTHGHTHTRAHSTHAHTHAHSHYHT.

This is an uncharacterized protein from Homo sapiens (Human).